A 271-amino-acid polypeptide reads, in one-letter code: Formamidopyrimidine-DNA glycosylase (271 aa).

Catalysis depends on P2, which acts as the Schiff-base intermediate with DNA. The active-site Proton donor is E3. K57 functions as the Proton donor; for beta-elimination activity in the catalytic mechanism. H90, R109, and K151 together coordinate DNA. The FPG-type zinc finger occupies 236-270 (HVYGRGGETCTQCGNLLSEIRLGQRTTVFCGICQT). The active-site Proton donor; for delta-elimination activity is R260.

This sequence belongs to the FPG family. In terms of assembly, monomer. Requires Zn(2+) as cofactor.

It catalyses the reaction Hydrolysis of DNA containing ring-opened 7-methylguanine residues, releasing 2,6-diamino-4-hydroxy-5-(N-methyl)formamidopyrimidine.. The enzyme catalyses 2'-deoxyribonucleotide-(2'-deoxyribose 5'-phosphate)-2'-deoxyribonucleotide-DNA = a 3'-end 2'-deoxyribonucleotide-(2,3-dehydro-2,3-deoxyribose 5'-phosphate)-DNA + a 5'-end 5'-phospho-2'-deoxyribonucleoside-DNA + H(+). Involved in base excision repair of DNA damaged by oxidation or by mutagenic agents. Acts as a DNA glycosylase that recognizes and removes damaged bases. Has a preference for oxidized purines, such as 7,8-dihydro-8-oxoguanine (8-oxoG). Has AP (apurinic/apyrimidinic) lyase activity and introduces nicks in the DNA strand. Cleaves the DNA backbone by beta-delta elimination to generate a single-strand break at the site of the removed base with both 3'- and 5'-phosphates. The chain is Formamidopyrimidine-DNA glycosylase from Shewanella sp. (strain MR-7).